Consider the following 121-residue polypeptide: Fluoride-specific ion channel FluC (121 aa).

4 consecutive transmembrane segments (helical) span residues 5 to 25 (LLIF…TISI), 33 to 53 (FPWG…VFYT), 66 to 83 (LMLT…STFS), and 98 to 118 (FFTY…LGIW). 2 residues coordinate Na(+): Gly74 and Thr77.

Belongs to the fluoride channel Fluc/FEX (TC 1.A.43) family.

The protein localises to the cell inner membrane. It catalyses the reaction fluoride(in) = fluoride(out). Its activity is regulated as follows. Na(+) is not transported, but it plays an essential structural role and its presence is essential for fluoride channel function. Its function is as follows. Fluoride-specific ion channel. Important for reducing fluoride concentration in the cell, thus reducing its toxicity. The sequence is that of Fluoride-specific ion channel FluC from Phocaeicola vulgatus (strain ATCC 8482 / DSM 1447 / JCM 5826 / CCUG 4940 / NBRC 14291 / NCTC 11154) (Bacteroides vulgatus).